We begin with the raw amino-acid sequence, 1148 residues long: Trafficking protein particle complex subunit 9 (1148 aa).

Phosphoserine occurs at positions 566 and 953.

It belongs to the NIBP family. Component of the multisubunit TRAPP (transport protein particle) complex, which includes at least TRAPPC2, TRAPPC2L, TRAPPC3, TRAPPC3L, TRAPPC4, TRAPPC5, TRAPPC8, TRAPPC9, TRAPPC10, TRAPPC11 and TRAPPC12. Directly interacts with IKBKB and MAP3K14. As to expression, expressed in neurons of the pyramidal layer of the cortex, in spinal cord motor neurons and white matter neurons (at protein level).

It localises to the golgi apparatus. Its subcellular location is the cis-Golgi network. It is found in the endoplasmic reticulum. The protein localises to the cytoplasm. Its function is as follows. Functions as an activator of NF-kappa-B through increased phosphorylation of the IKK complex. May function in neuronal cells differentiation. May play a role in vesicular transport from endoplasmic reticulum to Golgi. In Mus musculus (Mouse), this protein is Trafficking protein particle complex subunit 9 (Trappc9).